An 842-amino-acid polypeptide reads, in one-letter code: Protein P (842 aa).

Residues 1–177 (MPLSYQHFRR…FCGSPYTWEQ (177 aa)) are terminal protein domain (TP). A spacer region spans residues 178–345 (DLQHGAFLDG…YCLSHLVNLL (168 aa)). The tract at residues 184-238 (FLDGPSRVGKEPFRQQSSRIPSRSPVGPSIQSKYQQSRLGLQSQKGPLARGQQGR) is disordered. Residues 197-208 (RQQSSRIPSRSP) show a composition bias toward low complexity. Polar residues predominate over residues 212 to 228 (SIQSKYQQSRLGLQSQK). Positions 346-689 (QDWGPCTEHG…YMNLYPVARQ (344 aa)) are polymerase/reverse transcriptase domain (RT). A Reverse transcriptase domain is found at 356 to 599 (EHHIRIPRTP…YSLNFMGYVI (244 aa)). Aspartate 428, aspartate 550, and aspartate 551 together coordinate Mg(2+).

This sequence belongs to the hepadnaviridae P protein family.

The catalysed reaction is DNA(n) + a 2'-deoxyribonucleoside 5'-triphosphate = DNA(n+1) + diphosphate. It carries out the reaction Endonucleolytic cleavage to 5'-phosphomonoester.. Its activity is regulated as follows. Activated by host HSP70 and HSP40 in vitro to be able to bind the epsilon loop of the pgRNA. Because deletion of the RNase H region renders the protein partly chaperone-independent, the chaperones may be needed indirectly to relieve occlusion of the RNA-binding site by this domain. Inhibited by several reverse-transcriptase inhibitors: Lamivudine, Adefovir and Entecavir. Functionally, multifunctional enzyme that converts the viral RNA genome into dsDNA in viral cytoplasmic capsids. This enzyme displays a DNA polymerase activity that can copy either DNA or RNA templates, and a ribonuclease H (RNase H) activity that cleaves the RNA strand of RNA-DNA heteroduplexes in a partially processive 3'- to 5'-endonucleasic mode. Neo-synthesized pregenomic RNA (pgRNA) are encapsidated together with the P protein, and reverse-transcribed inside the nucleocapsid. Initiation of reverse-transcription occurs first by binding the epsilon loop on the pgRNA genome, and is initiated by protein priming, thereby the 5'-end of (-)DNA is covalently linked to P protein. Partial (+)DNA is synthesized from the (-)DNA template and generates the relaxed circular DNA (RC-DNA) genome. After budding and infection, the RC-DNA migrates in the nucleus, and is converted into a plasmid-like covalently closed circular DNA (cccDNA). The activity of P protein does not seem to be necessary for cccDNA generation, and is presumably released from (+)DNA by host nuclear DNA repair machinery. The protein is Protein P of Hepatitis B virus genotype G (isolate IG29227/2000) (HBV-G).